The following is a 467-amino-acid chain: Light-independent protochlorophyllide reductase subunit N (467 aa).

[4Fe-4S] cluster-binding residues include cysteine 23, cysteine 48, and cysteine 108.

It belongs to the BchN/ChlN family. Protochlorophyllide reductase is composed of three subunits; ChlL, ChlN and ChlB. Forms a heterotetramer of two ChlB and two ChlN subunits. [4Fe-4S] cluster serves as cofactor.

It catalyses the reaction chlorophyllide a + oxidized 2[4Fe-4S]-[ferredoxin] + 2 ADP + 2 phosphate = protochlorophyllide a + reduced 2[4Fe-4S]-[ferredoxin] + 2 ATP + 2 H2O. It functions in the pathway porphyrin-containing compound metabolism; chlorophyll biosynthesis (light-independent). Functionally, component of the dark-operative protochlorophyllide reductase (DPOR) that uses Mg-ATP and reduced ferredoxin to reduce ring D of protochlorophyllide (Pchlide) to form chlorophyllide a (Chlide). This reaction is light-independent. The NB-protein (ChlN-ChlB) is the catalytic component of the complex. The chain is Light-independent protochlorophyllide reductase subunit N from Nostoc sp. (strain PCC 7120 / SAG 25.82 / UTEX 2576).